The chain runs to 535 residues: uncharacterized protein (535 aa).

The disordered stretch occupies residues 1-34 (MKAIDNQIRNISSSHQDKHSDKVNSHQHHGKVDK). Basic and acidic residues predominate over residues 15–34 (HQDKHSDKVNSHQHHGKVDK).

This is an uncharacterized protein from Escherichia coli (strain K12).